The following is a 341-amino-acid chain: Heat-inducible transcription repressor HrcA (341 aa).

Belongs to the HrcA family.

In terms of biological role, negative regulator of class I heat shock genes (grpE-dnaK-dnaJ and groELS operons). Prevents heat-shock induction of these operons. This Mycobacteroides abscessus (strain ATCC 19977 / DSM 44196 / CCUG 20993 / CIP 104536 / JCM 13569 / NCTC 13031 / TMC 1543 / L948) (Mycobacterium abscessus) protein is Heat-inducible transcription repressor HrcA.